The primary structure comprises 556 residues: MKTDIEIAQEAEMLHIRNIAEKLGLDEEDIEYYGKYKCKISLDVYNKVKNNRDGKLVLVTAINPTPAGEGKSTVTVGLGDALNKMGKNTVIALREPSLGPVFGIKGGAAGGGYAQVVPMEDINLHFTGDMHAITSANNLLSAAIDNHIHQGNNLRIDSRRIIFKRVMDMNDRALRKIIVGMGGKINGFVREDGFTITVASEIMAILCLASDLEDLKHRMGDILIAYDLDGNPVYAKQLEIQGAMALLMKDAIKPNLVQTLENTPALIHGGPFANIAHGCNSIMATKLSLKLGDIVVTEAGFGADLGAEKFFDIKCRYGNLKPCCVVIVATIRALKHHGGVAKADLNIPNVEALRLGIANLEKQIENIKKFNVEPVVAINKFVSDSDEEVEFIKEFCEKLGVKVALSDVWAKGGDGGIELGEAVLDVIEKDKSSFKTLYKADNTIEEKILTIAKEIYGADGVVYSNEAKKQIGELVKFNLDKLPICMAKTQYSLSDNPNLLAKPSGFNINVQEIRVSNGAGFIVVQTGNIMTMPGLPKVPAANKMDVLKDGEIVGLF.

Position 65 to 72 (65 to 72 (TPAGEGKS)) interacts with ATP.

Belongs to the formate--tetrahydrofolate ligase family.

It carries out the reaction (6S)-5,6,7,8-tetrahydrofolate + formate + ATP = (6R)-10-formyltetrahydrofolate + ADP + phosphate. It participates in one-carbon metabolism; tetrahydrofolate interconversion. This is Formate--tetrahydrofolate ligase from Clostridium botulinum (strain Alaska E43 / Type E3).